A 582-amino-acid chain; its full sequence is Hydrogen peroxide stress regulator 1 (582 aa).

Disordered stretches follow at residues 24-55 (SPFA…HNSS), 107-154 (YPSA…GISK), 347-366 (TSYN…SGET), and 375-422 (NTSG…GGKS). Residues 107–125 (YPSASFSTSQHPSQVYNDG) are compositionally biased toward polar residues. Residues 126–143 (STLNSNNTTQQLNNNNGF) are compositionally biased toward low complexity. A compositionally biased stretch (polar residues) spans 375–392 (NTSGRSPNSMEATEQIGT). A C2H2-type 1 zinc finger spans residues 423 to 446 (FVCPECSKKFKRSEHLRRHIRSLH). Residues 452 to 473 (FVCICGKRFSRRDNLRQHERLH) form a C2H2-type 2; atypical zinc finger.

It localises to the nucleus. Transcription factor that globally supports gene expression in response to hydrogen peroxide. The protein is Hydrogen peroxide stress regulator 1 (hsr1) of Schizosaccharomyces pombe (strain 972 / ATCC 24843) (Fission yeast).